Here is a 2476-residue protein sequence, read N- to C-terminus: Non-reducing polyketide synthase ausA (2476 aa).

The N-terminal acylcarrier protein transacylase domain (SAT) stretch occupies residues 14 to 253 (VLFGPKYPEV…HHSNHTQAVE (240 aa)). One can recognise a Ketosynthase family 3 (KS3) domain in the interval 379 to 795 (AVPIAVTGMA…GSNAAIVLRE (417 aa)). Residues Cys-544, His-679, and His-718 each act as for beta-ketoacyl synthase activity in the active site. The malonyl-CoA:ACP transacylase (MAT) domain stretch occupies residues 906–1210 (ICFGGQTGDT…LPTDLSGAQA (305 aa)). Residue Ser-993 is the For acyl/malonyl transferase activity of the active site. Residues 1277–1405 (QEASLVRLLR…GRVSLQAAGS (129 aa)) are N-terminal hotdog fold. Positions 1277 to 1584 (QEASLVRLLR…FTGVSIQSLK (308 aa)) constitute a PKS/mFAS DH domain. The segment at 1280–1583 (SLVRLLRQDG…TFTGVSIQSL (304 aa)) is product template (PT) domain. Residue His-1310 is the Proton acceptor; for dehydratase activity of the active site. The segment at 1433-1584 (SSSGLKRSTV…FTGVSIQSLK (152 aa)) is C-terminal hotdog fold. The Proton donor; for dehydratase activity role is filled by Asp-1491. A Carrier domain is found at 1626–1700 (DGDLLAVQTM…GLVQRIFPGH (75 aa)). Ser-1660 carries the post-translational modification O-(pantetheine 4'-phosphoryl)serine. The segment at 1862-2095 (QHASEHKLLH…GFNWVDWTDN (234 aa)) is methyltransferase (CMeT) domain. Positions 2128-2476 (NTVQEQTVLY…YEFLRRHVGL (349 aa)) are thioesterase (TE) domain. Residues Ser-2251, Asp-2413, and His-2445 each act as for thioesterase activity in the active site.

It carries out the reaction 3 malonyl-CoA + acetyl-CoA + 2 S-adenosyl-L-methionine = 3,5-dimethylorsellinate + 2 S-adenosyl-L-homocysteine + 3 CO2 + 4 CoA. It functions in the pathway secondary metabolite biosynthesis; terpenoid biosynthesis. Its function is as follows. Non-reducing polyketide synthase; part of the gene cluster A that mediates the biosynthesis of austinol and dehydroaustinol, two fungal meroterpenoids. The first step of the pathway is the synthesis of 3,5-dimethylorsellinic acid by the polyketide synthase ausA. 3,5-dimethylorsellinic acid is then prenylated by the polyprenyl transferase ausN. Further epoxidation by the FAD-dependent monooxygenase ausM and cyclization by the probable terpene cyclase ausL lead to the formation of protoaustinoid A. Protoaustinoid A is then oxidized to spiro-lactone preaustinoid A3 by the combined action of the FAD-binding monooxygenases ausB and ausC, and the dioxygenase ausE. Acid-catalyzed keto-rearrangement and ring contraction of the tetraketide portion of preaustinoid A3 by ausJ lead to the formation of preaustinoid A4. The aldo-keto reductase ausK, with the help of ausH, is involved in the next step by transforming preaustinoid A4 into isoaustinone which is in turn hydroxylated by the P450 monooxygenase ausI to form austinolide. Finally, the cytochrome P450 monooxygenase ausG modifies austinolide to austinol. Austinol can be further modified to dehydroaustinol which forms a diffusible complex with diorcinol that initiates conidiation. Due to genetic rearrangements of the clusters and the subsequent loss of some enzymes, the end products of the Emericella nidulans austinoid biosynthesis clusters are austinol and dehydroaustinol, even if additional enzymes, such as the O-acetyltransferase ausQ and the cytochrome P450 monooxygenase ausR are still functional. The protein is Non-reducing polyketide synthase ausA of Emericella nidulans (strain FGSC A4 / ATCC 38163 / CBS 112.46 / NRRL 194 / M139) (Aspergillus nidulans).